A 619-amino-acid polypeptide reads, in one-letter code: MKRKLDANDVPSTEVAEEKETKDADNTDFESLNLDPRLRQALIREQFTKPTPVQSKAIPLALEGKDILARAKTGSGKTAAYVLPILQTILQKKAADPSLKATTGLVLVPTRELAEQVQSVIIKFSAFCGKDVRSVNLTQKVSDAVQRTMLADYPDLIVSTPARVIANLGTSALSLEHLTHLVIDEADLVLSYGYDEDINALAKAIPRGVQTFLMSATLTSEVDTLKGLFCRSPVILKLEDKEDEGAGISQFVVRCAEDEKFLLTYVIFKLQLIKGKVIIFVGDIDRCYRLKLFLEQFGIKSCVLNSELPINSRIHVVQEFNKGVYDIIIAADEQEVMGSRTSSKKSKEATDGDDEAKDKMGSSEDEDNEPEQSGKSARPEKRRKTSGKAKDYGISRGIDFQNVACVLNFDLPTTSKSYTHRIGRTGRAGKAGMALSFVVPADEFGKHKPTSFPTAKHDESVLAKIVKKQAKLGHEVKPYHFEMKQVDAFRYRMTDALRAVTRLAIQEARAREIRQELVKSEKLKRHFEENPEELKQLRHDGELRAARIQPHLKHIPDYLMPSKGRKGISSEDVGFVGFRKSGDNRIRKAREKNRGKGKGRKPSGVRKVDPLKTFNRGRK.

The segment at 1–30 (MKRKLDANDVPSTEVAEEKETKDADNTDFE) is disordered. Over residues 16–25 (AEEKETKDAD) the composition is skewed to basic and acidic residues. The Q motif signature appears at 27–55 (TDFESLNLDPRLRQALIREQFTKPTPVQS). One can recognise a Helicase ATP-binding domain in the interval 58 to 236 (IPLALEGKDI…GLFCRSPVIL (179 aa)). Residue 71–78 (AKTGSGKT) coordinates ATP. The DEAD box signature appears at 184–187 (DEAD). In terms of domain architecture, Helicase C-terminal spans 247–484 (GISQFVVRCA…EVKPYHFEMK (238 aa)). Disordered stretches follow at residues 339–390 (SRTS…GKAK) and 582–619 (GDNRIRKAREKNRGKGKGRKPSGVRKVDPLKTFNRGRK). The segment covering 345–362 (KSKEATDGDDEAKDKMGS) has biased composition (basic and acidic residues). The segment covering 587 to 604 (RKAREKNRGKGKGRKPSG) has biased composition (basic residues).

The protein belongs to the DEAD box helicase family. DDX56/DBP9 subfamily.

The protein localises to the nucleus. It localises to the nucleolus. The catalysed reaction is ATP + H2O = ADP + phosphate + H(+). Its function is as follows. ATP-binding RNA helicase involved in the biogenesis of 60S ribosomal subunits and is required for the normal formation of 25S and 5.8S rRNAs. The protein is ATP-dependent RNA helicase dbp9 (dbp9) of Neosartorya fischeri (strain ATCC 1020 / DSM 3700 / CBS 544.65 / FGSC A1164 / JCM 1740 / NRRL 181 / WB 181) (Aspergillus fischerianus).